A 412-amino-acid chain; its full sequence is Serine hydroxymethyltransferase 1 (412 aa).

Residues L116 and 120–122 each bind (6S)-5,6,7,8-tetrahydrofolate; that span reads GHL. K225 carries the post-translational modification N6-(pyridoxal phosphate)lysine.

Belongs to the SHMT family. As to quaternary structure, homodimer. Pyridoxal 5'-phosphate serves as cofactor.

The protein localises to the cytoplasm. It carries out the reaction (6R)-5,10-methylene-5,6,7,8-tetrahydrofolate + glycine + H2O = (6S)-5,6,7,8-tetrahydrofolate + L-serine. It participates in one-carbon metabolism; tetrahydrofolate interconversion. The protein operates within amino-acid biosynthesis; glycine biosynthesis; glycine from L-serine: step 1/1. Catalyzes the reversible interconversion of serine and glycine with tetrahydrofolate (THF) serving as the one-carbon carrier. This reaction serves as the major source of one-carbon groups required for the biosynthesis of purines, thymidylate, methionine, and other important biomolecules. Also exhibits THF-independent aldolase activity toward beta-hydroxyamino acids, producing glycine and aldehydes, via a retro-aldol mechanism. The sequence is that of Serine hydroxymethyltransferase 1 from Pseudomonas fluorescens (strain Pf0-1).